Reading from the N-terminus, the 433-residue chain is tRNA-queuosine alpha-mannosyltransferase (433 aa).

Positions 194 to 244 (PAAKSHIQTSSPSSYPDVEPPEKMLNVAGTNQSHEPTSVTPHQETASPLCG) are disordered. Residues 221-239 (AGTNQSHEPTSVTPHQETA) are compositionally biased toward polar residues.

It belongs to the glycosyltransferase group 1 family. Glycosyltransferase 4 subfamily.

The protein localises to the cytoplasm. Its subcellular location is the nucleus. The catalysed reaction is queuosine(34) in tRNA(Asp) + GDP-alpha-D-mannose = O-4''-alpha-D-mannosylqueuosine(34) in tRNA(Asp) + GDP + H(+). Glycosyltransferase that specifically catalyzes mannosylation of cytoplasmic tRNA(Asp) modified with queuosine at position 34 (queuosine(34)). Mannosylates the cyclopentene moiety of queuosine(34) in tRNA(Asp) to form mannosyl-queuosine(34). Mannosylation of queuosine(34) in tRNA(Asp) is required to slow-down elongation at cognate codons, GAC and GAU, thereby regulating protein translation. This chain is tRNA-queuosine alpha-mannosyltransferase (gtdc1), found in Danio rerio (Zebrafish).